Here is a 682-residue protein sequence, read N- to C-terminus: Potassium-transporting ATPase ATP-binding subunit (682 aa).

A run of 4 helical transmembrane segments spans residues 34–54, 62–82, 219–239, and 254–274; these read PVMFIVWIGSLLTTCISIAMA, ALFSAAISGWLWVTVLFANFA, IALTILLIALTIVFLLATATL, and VLVALLVCLIPTTIGGLLSAI. Aspartate 307 functions as the 4-aspartylphosphate intermediate in the catalytic mechanism. Residues aspartate 344, glutamate 348, 377–384, and lysine 395 each bind ATP; that span reads FTAQSRMS. Aspartate 518 and aspartate 522 together coordinate Mg(2+). Helical transmembrane passes span 588–608, 616–636, and 656–676; these read FAIIPAAFAATYPQLNALNIM, AILSAVIFNALIIVFLIPLAL, and IYGLGGLLVPFIGIKVIDLLL.

The protein belongs to the cation transport ATPase (P-type) (TC 3.A.3) family. Type IA subfamily. The system is composed of three essential subunits: KdpA, KdpB and KdpC.

The protein localises to the cell inner membrane. It catalyses the reaction K(+)(out) + ATP + H2O = K(+)(in) + ADP + phosphate + H(+). Part of the high-affinity ATP-driven potassium transport (or Kdp) system, which catalyzes the hydrolysis of ATP coupled with the electrogenic transport of potassium into the cytoplasm. This subunit is responsible for energy coupling to the transport system and for the release of the potassium ions to the cytoplasm. This chain is Potassium-transporting ATPase ATP-binding subunit, found in Shigella boydii serotype 4 (strain Sb227).